A 2359-amino-acid polypeptide reads, in one-letter code: Pre-mRNA-processing-splicing factor 8B (2359 aa).

The segment at 1–50 (MWNIDGTSLAPPGTDGSRMQTPSHPADHPSYTAPSNRNTPTVPTPEDAEA) is disordered. Residues 32–41 (TAPSNRNTPT) show a composition bias toward polar residues. An MPN domain is found at 2129-2260 (TYIMPKNILK…LTSYKLTQAG (132 aa)).

The protein localises to the nucleus. In terms of biological role, functions as a scaffold that mediates the ordered assembly of spliceosomal proteins and snRNAs. Required for the assembly of the U4/U6-U5 tri-snRNP complex. The polypeptide is Pre-mRNA-processing-splicing factor 8B (Arabidopsis thaliana (Mouse-ear cress)).